Consider the following 466-residue polypeptide: Asparagine--tRNA ligase (466 aa).

It belongs to the class-II aminoacyl-tRNA synthetase family. Homodimer.

It is found in the cytoplasm. The enzyme catalyses tRNA(Asn) + L-asparagine + ATP = L-asparaginyl-tRNA(Asn) + AMP + diphosphate + H(+). This Shewanella putrefaciens (strain CN-32 / ATCC BAA-453) protein is Asparagine--tRNA ligase.